The primary structure comprises 94 residues: Probable Fe(2+)-trafficking protein (94 aa).

Belongs to the Fe(2+)-trafficking protein family.

Its function is as follows. Could be a mediator in iron transactions between iron acquisition and iron-requiring processes, such as synthesis and/or repair of Fe-S clusters in biosynthetic enzymes. This is Probable Fe(2+)-trafficking protein from Marinomonas sp. (strain MWYL1).